The primary structure comprises 745 residues: 5-methyltetrahydropteroyltriglutamate--homocysteine methyltransferase (745 aa).

Residues Arg19 to Lys22 and Lys119 each bind 5-methyltetrahydropteroyltri-L-glutamate. L-homocysteine is bound by residues Ile418 to Ser420 and Glu471. L-methionine contacts are provided by residues Ile418–Ser420 and Glu471. Residues Arg502–Cys503 and Trp548 contribute to the 5-methyltetrahydropteroyltri-L-glutamate site. Asp586 is an L-homocysteine binding site. Asp586 serves as a coordination point for L-methionine. Glu592 contacts 5-methyltetrahydropteroyltri-L-glutamate. His628, Cys630, and Glu652 together coordinate Zn(2+). His681 functions as the Proton donor in the catalytic mechanism. Residue Cys713 coordinates Zn(2+).

The protein belongs to the vitamin-B12 independent methionine synthase family. It depends on Zn(2+) as a cofactor.

The catalysed reaction is 5-methyltetrahydropteroyltri-L-glutamate + L-homocysteine = tetrahydropteroyltri-L-glutamate + L-methionine. The protein operates within amino-acid biosynthesis; L-methionine biosynthesis via de novo pathway; L-methionine from L-homocysteine (MetE route): step 1/1. Catalyzes the transfer of a methyl group from 5-methyltetrahydrofolate to homocysteine resulting in methionine formation. The sequence is that of 5-methyltetrahydropteroyltriglutamate--homocysteine methyltransferase from Corynebacterium glutamicum (strain ATCC 13032 / DSM 20300 / JCM 1318 / BCRC 11384 / CCUG 27702 / LMG 3730 / NBRC 12168 / NCIMB 10025 / NRRL B-2784 / 534).